The chain runs to 884 residues: Translation initiation factor IF-2 (884 aa).

Composition is skewed to basic and acidic residues over residues 110 to 153 and 193 to 234; these read AKAK…KEKA and KQKE…DHHV. A disordered region spans residues 110–291; that stretch reads AKAKAEADAK…NRSTAPQSMA (182 aa). Basic residues predominate over residues 255 to 268; that stretch reads GRRARNKPTNKKRG. Residues 384–553 enclose the tr-type G domain; sequence TRAPVVTIMG…LLQSEVLELK (170 aa). Residues 393-400 form a G1 region; that stretch reads GHVDHGKT. 393 to 400 is a GTP binding site; sequence GHVDHGKT. A G2 region spans residues 418–422; sequence GITQH. A G3 region spans residues 439–442; the sequence is DTPG. Residues 439–443 and 493–496 each bind GTP; these read DTPGH and NKMD. Residues 493–496 form a G4 region; sequence NKMD. The interval 529 to 531 is G5; sequence SAK.

It belongs to the TRAFAC class translation factor GTPase superfamily. Classic translation factor GTPase family. IF-2 subfamily.

The protein resides in the cytoplasm. Functionally, one of the essential components for the initiation of protein synthesis. Protects formylmethionyl-tRNA from spontaneous hydrolysis and promotes its binding to the 30S ribosomal subunits. Also involved in the hydrolysis of GTP during the formation of the 70S ribosomal complex. The sequence is that of Translation initiation factor IF-2 from Shewanella denitrificans (strain OS217 / ATCC BAA-1090 / DSM 15013).